The chain runs to 503 residues: MALGRAFSVAVRGLDGEIVEIEADITSGLPGVHLVGLPDAALQESRDRVRAAVTNCGNSWPMARLTLALSPATLPKMGSVYDIALAAAVLSAQQKKPWERLENTLLLGELSLDGRVRPVRGVLPAVLAAKRDGWPAVVVPADNLPEASLVDGIDVRGVRTLGQLQSWLRGSTGLAGRITTADTTPESAADLADVVGQSQARFAVEVAAAGAHHLMLTGPPGVGKTMLAQRLPGLLPSLSGSESLEVTAIHSVAGLLSGDTPLITRPPFVAPHHSSSVAALVGGGSGMARPGAVSRAHRGVLFLDECAEISLSALEALRTPLEDGEIRLARRDGVACYPARFQLVLAANPCPCAPADPQDCICAAATKRRYLGKLSGPLLDRVDLRVQMHRLRAGAFSAADGESTSQVRQRVALAREAAAQRWRPHGFRTNAEVSGPLLRRKFRPSSAAMLPLRTALDRGLLSIRGVDRTLRVAWSLADLAGRTSPGIDEVAAALSFRQTGARR.

The protein belongs to the Mg-chelatase subunits D/I family. ComM subfamily.

This is an uncharacterized protein from Mycobacterium bovis (strain ATCC BAA-935 / AF2122/97).